The primary structure comprises 484 residues: mRNA decay activator protein ZFP36L2 (484 aa).

Ser-57 and Ser-127 each carry phosphoserine. Residues 100–152 (YGQLKEPSGGSGTALVTKESKFRDRSFSENGERSQHLLHLQQQQKGGSGSQIN) form a disordered region. Positions 117–134 (KESKFRDRSFSENGERSQ) are enriched in basic and acidic residues. The RNA-binding signature appears at 155–160 (RYKTEL). C3H1-type zinc fingers lie at residues 155–183 (RYKT…HGFH) and 193–221 (KYKT…HNAD). The RNA-binding stretch occupies residues 172 to 213 (YGEKCQFAHGFHELRSLTRHPKYKTELCRTFHTIGFCPYGPR). Disordered stretches follow at residues 261–304 (SLSF…SCSS) and 395–484 (QQGL…ISDD). The segment covering 401-418 (PAPPPAQPPAAPAPPSPP) has biased composition (pro residues). The segment covering 449 to 468 (YLSGSLSSGSLSGSESPSLD) has biased composition (low complexity). Ser-480 and Ser-482 each carry phosphoserine; by RPS6KA1.

Associates with the cytoplasmic CCR4-NOT deadenylase to trigger ARE-containing mRNA deadenylation and decay processes. Interacts with CNOT7; this interaction is inhibited in response to phorbol 12-myristate 13-acetate (PMA) treatment in a p38 MAPK-dependent manner. Interacts with CNOT6L. Phosphorylated by RPS6KA1 at Ser-480 and Ser-482 upon phorbol 12-myristate 13-acetate (PMA) treatment; this phosphorylation results in dissociation of the CCR4-NOT-deadenylase complex and induces p38 MAPK-mediated stabilization of the low-density lipoprotein (LDL) receptor (LDLR) mRNA. Phosphorylation occurs during early preadipocyte differentiation. As to expression, expressed in preadipocytes and adipocytes (at protein level). Expressed at highest level in lymphoid tissues such as thymus, spleen, lung, uterus, ovary, small and large intestine, mammary gland, fat and bone marrow. Expressed at intermediate level in kidney, heart, adrenal, eye and fetal liver. Weakly expressed in brain, skeletal muscle and liver. Expressed through B lymphocyte development. Expressed in superior cervical ganglion (SCG) and dorsal root ganglion (DRG). Expressed in embryonic stem cells (ESCs). Expressed in oocytes.

Its subcellular location is the nucleus. It is found in the cytoplasm. Functionally, zinc-finger RNA-binding protein that destabilizes several cytoplasmic AU-rich element (ARE)-containing mRNA transcripts by promoting their poly(A) tail removal or deadenylation, and hence provide a mechanism for attenuating protein synthesis. Acts as a 3'-untranslated region (UTR) ARE mRNA-binding adapter protein to communicate signaling events to the mRNA decay machinery. Functions by recruiting the CCR4-NOT deadenylase complex and probably other components of the cytoplasmic RNA decay machinery to the bound ARE-containing mRNAs, and hence promotes ARE-mediated mRNA deadenylation and decay processes. Binds to 3'-UTR ARE of numerous mRNAs. Promotes ARE-containing mRNA decay of the low-density lipoprotein (LDL) receptor (LDLR) mRNA in response to phorbol 12-myristate 13-acetate (PMA) treatment in a p38 MAPK-dependent manner. Positively regulates early adipogenesis by promoting ARE-mediated mRNA decay of immediate early genes (IEGs). Plays a role in mature peripheral neuron integrity by promoting ARE-containing mRNA decay of the transcriptional repressor REST mRNA. Plays a role in ovulation and oocyte meiotic maturation by promoting ARE-mediated mRNA decay of the luteinizing hormone receptor LHCGR mRNA. Acts as a negative regulator of erythroid cell differentiation: promotes glucocorticoid-induced self-renewal of erythroid cells by binding mRNAs that are induced or highly expressed during terminal erythroid differentiation and promotes their degradation, preventing erythroid cell differentiation. In association with ZFP36L1 maintains quiescence on developing B lymphocytes by promoting ARE-mediated decay of several mRNAs encoding cell cycle regulators that help B cells progress through the cell cycle, and hence ensuring accurate variable-diversity-joining (VDJ) recombination process and functional immune cell formation. Together with ZFP36L1 is also necessary for thymocyte development and prevention of T-cell acute lymphoblastic leukemia (T-ALL) transformation by promoting ARE-mediated mRNA decay of the oncogenic transcription factor NOTCH1 mRNA. This chain is mRNA decay activator protein ZFP36L2, found in Mus musculus (Mouse).